The primary structure comprises 431 residues: Elongation factor 1-gamma (431 aa).

The 83-residue stretch at V2 to G84 folds into the GST N-terminal domain. A GST C-terminal domain is found at C86 to F212. Residues K223–A261 are disordered. Low complexity predominate over residues A226 to Q236. The span at K237–E254 shows a compositional bias: basic and acidic residues. Residues S272–K431 enclose the EF-1-gamma C-terminal domain. S294 carries the phosphoserine modification.

In terms of assembly, interacts with microtubules. May interact with BicDR; the interaction is probably indirect. Interacts (via C-terminus) with Doa; the interaction is probably direct, is transient and leads to phosphorylation of eEF1gamma by Doa. EF-1 is composed of four subunits: alpha, beta, delta, and gamma. Phosphorylated on Ser-294 by LAMMER kinases, including Doa. Phosphorylation on Ser-294 by Doa is required for negative regulation of microtubule-based transport.

The protein localises to the cytoplasm. It is found in the nucleus. Its subcellular location is the cytoskeleton. Microtubule binding protein involved in regulation of microtubule-based transport. Probably plays a role in anchoring the EF-1 complex to other cellular components. Probably involved in formation and/or development of mechanosensory organs during metamorphosis. Required for cellular and organismal viability. Not essential for the innate immune response to bacterial infection. This chain is Elongation factor 1-gamma, found in Drosophila melanogaster (Fruit fly).